A 1384-amino-acid chain; its full sequence is MMHLRLFCILLAAVSGAEGWGYYGCDEELVGPLYARSLGASSYYSLLTAPRFARLHGISGWSPRIGDPNPWLQIDLMKKHRIRAVATQGSFNSWDWVTRYMLLYGDRVDSWTPFYQRGHNSTFFGNVNESAVVRHDLHFHFTARYIRIVPLAWNPRGKIGLRLGLYGCPYKADILYFDGDDAISYRFPRGVSRSLWDVFAFSFKTEEKDGLLLHAEGAQGDYVTLELEGAHLLLHMSLGSSPIQPRPGHTTVSAGGVLNDQHWHYVRVDRFGRDVNFTLDGYVQRFILNGDFERLNLDTEMFIGGLVGAARKNLAYRHNFRGCIENVIFNRVNIADLAVRRHSRITFEGKVAFRCLDPVPHPINFGGPHNFVQVPGFPRRGRLAVSFRFRTWDLTGLLLFSRLGDGLGHVELTLSEGQVNVSIAQSGRKKLQFAAGYRLNDGFWHEVNFVAQENHAVISIDDVEGAEVRVSYPLLIRTGTSYFFGGCPKPASRWDCHSNQTAFHGCMELLKVDGQLVNLTLVEGRRLGFYAEVLFDTCGITDRCSPNMCEHDGRCYQSWDDFICYCELTGYKGETCHTPLYKESCEAYRLSGKTSGNFTIDPDGSGPLKPFVVYCDIRENRAWTVVRHDRLWTTRVTGSSMERPFLGAIQYWNASWEEVSALANASQHCEQWIEFSCYNSRLLNTAGGYPYSFWIGRNEEQHFYWGGSQPGIQRCACGLDRSCVDPALYCNCDADQPQWRTDKGLLTFVDHLPVTQVVIGDTNRSTSEAQFFLRPLRCYGDRNSWNTISFHTGAALRFPPIRANHSLDVSFYFRTSAPSGVFLENMGGPYCQWRRPYVRVELNTSRDVVFAFDVGNGDENLTVHSDDFEFNDDEWHLVRAEINVKQARLRVDHRPWVLRPMPLQTYIWMEYDQPLYVGSAELKRRPFVGCLRAMRLNGVTLNLEGRANASEGTSPNCTGHCAHPRLPCFHGGRCVERYSYYTCDCDLTAFDGPYCNHDIGGFFEPGTWMRYNLQSALRSAAREFSHMLSRPVPGYEPGYIPGYDTPGYVPGYHGPGYRLPDYPRPGRPVPGYRGPVYNVTGEEVSFSFSTSSAPAVLLYVSSFVRDYMAVLIKDDGTLQLRYQLGTSPYVYQLTTRPVTDGQPHSINITRVYRNLFIQVDYFPLTEQKFSLLVDSQLDSPKALYLGRVMETGVIDPEIQRYNTPGFSGCLSGVRFNNVAPLKTHFRTPRPMTAELAEALRVQGELSESNCGAMPRLVSEVPPELDPWYLPPDFPYYHDEGWVAILLGFLVAFLLLGLVGMLVLFYLQNHRYKGSYHTNEPKAAHEYHPGSKPPLPTSGPAQVPTPTAAPNQAPASAPAPAPTPAPAPGPRDQNLPQILEESRSE.

The N-terminal stretch at M1 to G19 is a signal peptide. The Extracellular portion of the chain corresponds to W20–A1283. An F5/8 type C domain is found at C25–C168. C25 and C168 are oxidised to a cystine. N-linked (GlcNAc...) asparagine glycosylation is found at N120, N128, and N276. Laminin G-like domains lie at F203 to C355 and F389 to C538. A disulfide bridge connects residues C323 and C355. N420, N499, and N518 each carry an N-linked (GlcNAc...) asparagine glycan. Intrachain disulfides connect C506/C538, C544/C555, C549/C564, and C566/C576. One can recognise an EGF-like 1 domain in the interval I540–H577. The Fibrinogen C-terminal domain occupies C576–A795. N-linked (GlcNAc...) asparagine glycosylation is found at N597, N653, N664, N763, N804, N843, N860, N948, and N956. A Laminin G-like 3 domain is found at F813–N956. Cystine bridges form between C930-C957, C961-C974, C968-C983, and C985-C995. Positions C957–N996 constitute an EGF-like 2 domain. N-linked (GlcNAc...) asparagine glycans are attached at residues N1078 and N1147. One can recognise a Laminin G-like 4 domain in the interval F1088–C1250. An intrachain disulfide couples C1209 to C1250. Residues I1284–F1304 traverse the membrane as a helical segment. Over Y1305–E1384 the chain is Cytoplasmic. Positions E1319 to P1328 are enriched in basic and acidic residues. The disordered stretch occupies residues E1319–E1384. The short motif at P1328 to P1369 is the SH3-binding element. Residues P1339–S1355 are compositionally biased toward low complexity. The segment covering A1356 to G1368 has biased composition (pro residues). S1383 carries the phosphoserine modification.

The protein belongs to the neurexin family. Interacts with CNTN1/contactin in cis form. In terms of tissue distribution, predominantly expressed in brain. Weak expression detected in ovary, pancreas, colon, lung, heart, intestine and testis.

It is found in the membrane. The protein localises to the cell junction. Its subcellular location is the paranodal septate junction. Its function is as follows. Required, with CNTNAP2, for radial and longitudinal organization of myelinated axons. Plays a role in the formation of functional distinct domains critical for saltatory conduction of nerve impulses in myelinated nerve fibers. Demarcates the paranodal region of the axo-glial junction. In association with contactin involved in the signaling between axons and myelinating glial cells. This is Contactin-associated protein 1 (CNTNAP1) from Homo sapiens (Human).